The primary structure comprises 165 residues: Chorismate pyruvate-lyase (165 aa).

4 residues coordinate substrate: methionine 35, arginine 77, leucine 115, and glutamate 156.

This sequence belongs to the UbiC family. Monomer.

It is found in the cytoplasm. The catalysed reaction is chorismate = 4-hydroxybenzoate + pyruvate. The protein operates within cofactor biosynthesis; ubiquinone biosynthesis. In terms of biological role, removes the pyruvyl group from chorismate, with concomitant aromatization of the ring, to provide 4-hydroxybenzoate (4HB) for the ubiquinone pathway. This Enterobacter sp. (strain 638) protein is Chorismate pyruvate-lyase.